We begin with the raw amino-acid sequence, 184 residues long: Protein GrpE (184 aa).

Residues 1 to 26 (MTAPQEPVDSTPESGENAATPGLEDD) form a disordered region.

Belongs to the GrpE family. As to quaternary structure, homodimer.

It is found in the cytoplasm. Its function is as follows. Participates actively in the response to hyperosmotic and heat shock by preventing the aggregation of stress-denatured proteins, in association with DnaK and GrpE. It is the nucleotide exchange factor for DnaK and may function as a thermosensor. Unfolded proteins bind initially to DnaJ; upon interaction with the DnaJ-bound protein, DnaK hydrolyzes its bound ATP, resulting in the formation of a stable complex. GrpE releases ADP from DnaK; ATP binding to DnaK triggers the release of the substrate protein, thus completing the reaction cycle. Several rounds of ATP-dependent interactions between DnaJ, DnaK and GrpE are required for fully efficient folding. The sequence is that of Protein GrpE from Bordetella bronchiseptica (strain ATCC BAA-588 / NCTC 13252 / RB50) (Alcaligenes bronchisepticus).